We begin with the raw amino-acid sequence, 358 residues long: Acyl-CoA desaturase 1 (358 aa).

Over 1–71 the chain is Cytoplasmic; it reads MPAHMLQEIS…EGPPPKLEYV (71 aa). The span at 8–24 shows a compositional bias: low complexity; it reads EISSSYTTTTTITEPPS. The segment at 8-33 is disordered; it reads EISSSYTTTTTITEPPSGNLQNGREK. Residues 72-92 traverse the membrane as a helical segment; it reads WRNIILMALLHVGALYGITLI. A substrate-binding site is contributed by Asn74. The Lumenal segment spans residues 93–96; sequence PSSK. The helical transmembrane segment at 97–117 threads the bilayer; that stretch reads VYTLLWGIFYYLISALGITAG. At 118–216 the chain is on the cytoplasmic side; sequence AHRLWSHRTY…EKLVMFQRRY (99 aa). 2 residues coordinate Fe cation: His119 and His124. Positions 119 to 124 match the Histidine box-1 motif; that stretch reads HRLWSH. Substrate is bound by residues Asn147, Arg154, and Asp155. Residues His156, His159, and His160 each contribute to the Fe cation site. The short motif at 156-160 is the Histidine box-2 element; that stretch reads HRAHH. Substrate is bound by residues Arg187 and Lys188. A helical membrane pass occupies residues 217–236; it reads YKPGLLLMCFILPTLVPWYC. The Lumenal portion of the chain corresponds to 237-240; that stretch reads WGET. The helical transmembrane segment at 241–262 threads the bilayer; the sequence is FLHSLFVSTFLRYTLVLNATWL. Trp261 is a substrate binding site. Residues 263-358 lie on the Cytoplasmic side of the membrane; the sequence is VNSAAHLYGY…RTGDGSHKSS (96 aa). 4 residues coordinate Fe cation: His268, His297, His300, and His301. The short motif at 297–301 is the Histidine box-3 element; the sequence is HNYHH.

Belongs to the fatty acid desaturase type 1 family. It depends on Fe(2+) as a cofactor. In terms of tissue distribution, detected in liver (at protein level). Detected in adipose tissue. Detected in liver when rats are kept on a fat-free diet, but not when their food contains unsaturated fatty acids.

It localises to the endoplasmic reticulum membrane. The protein resides in the membrane. It carries out the reaction octadecanoyl-CoA + 2 Fe(II)-[cytochrome b5] + O2 + 2 H(+) = (9Z)-octadecenoyl-CoA + 2 Fe(III)-[cytochrome b5] + 2 H2O. Its function is as follows. Stearoyl-CoA desaturase that utilizes O(2) and electrons from reduced cytochrome b5 to introduce the first double bond into saturated fatty acyl-CoA substrates. Catalyzes the insertion of a cis double bond at the Delta-9 position into fatty acyl-CoA substrates including palmitoyl-CoA and stearoyl-CoA. Gives rise to a mixture of 16:1 and 18:1 unsaturated fatty acids. Plays an important role in lipid biosynthesis. Plays an important role in regulating the expression of genes that are involved in lipogenesis and in regulating mitochondrial fatty acid oxidation. Plays an important role in body energy homeostasis. Contributes to the biosynthesis of membrane phospholipids, cholesterol esters and triglycerides. Required for normal development of sebaceous glands. Required for the biosynthesis of normal levels of Delta-9 unsaturated fatty acids and 1-alkyl-2,3-diacylglycerol in the Harderian gland. Required for normal production of meibum, an oily material that prevents drying of the cornea. The protein is Acyl-CoA desaturase 1 (Scd1) of Rattus norvegicus (Rat).